Reading from the N-terminus, the 323-residue chain is Pectate lyase A (323 aa).

Positions 1–31 (MTNFKWIVAAAGLLFGQVLAAPTATSTHAKR) are cleaved as a signal peptide. N95 carries an N-linked (GlcNAc...) asparagine glycan. Ca(2+) is bound by residues D136, D165, and D169. Residue R222 is part of the active site.

This sequence belongs to the polysaccharide lyase 1 family. It depends on Ca(2+) as a cofactor.

Its subcellular location is the secreted. It catalyses the reaction Eliminative cleavage of (1-&gt;4)-alpha-D-galacturonan to give oligosaccharides with 4-deoxy-alpha-D-galact-4-enuronosyl groups at their non-reducing ends.. Pectinolytic enzyme consist of four classes of enzymes: pectin lyase, polygalacturonase, pectin methylesterase and rhamnogalacturonase. Among pectinolytic enzymes, pectin lyase is the most important in depolymerization of pectin, since it cleaves internal glycosidic bonds of highly methylated pectins. Favors pectate, the anion, over pectin, the methyl ester. This chain is Pectate lyase A (plyA), found in Aspergillus niger.